The sequence spans 115 residues: NADH-ubiquinone oxidoreductase chain 3 (115 aa).

A run of 3 helical transmembrane segments spans residues 1–21, 58–78, and 84–104; these read MMML…VMLL, IAVI…IVII, and IMVW…GLYY.

Belongs to the complex I subunit 3 family.

It localises to the mitochondrion membrane. The catalysed reaction is a ubiquinone + NADH + 5 H(+)(in) = a ubiquinol + NAD(+) + 4 H(+)(out). Functionally, core subunit of the mitochondrial membrane respiratory chain NADH dehydrogenase (Complex I) that is believed to belong to the minimal assembly required for catalysis. Complex I functions in the transfer of electrons from NADH to the respiratory chain. The immediate electron acceptor for the enzyme is believed to be ubiquinone. This chain is NADH-ubiquinone oxidoreductase chain 3 (ND3), found in Locusta migratoria (Migratory locust).